Reading from the N-terminus, the 236-residue chain is 2,3,4,5-tetrahydropyridine-2,6-dicarboxylate N-acetyltransferase (236 aa).

Belongs to the transferase hexapeptide repeat family. DapH subfamily.

It carries out the reaction (S)-2,3,4,5-tetrahydrodipicolinate + acetyl-CoA + H2O = L-2-acetamido-6-oxoheptanedioate + CoA. The protein operates within amino-acid biosynthesis; L-lysine biosynthesis via DAP pathway; LL-2,6-diaminopimelate from (S)-tetrahydrodipicolinate (acetylase route): step 1/3. Its function is as follows. Catalyzes the transfer of an acetyl group from acetyl-CoA to tetrahydrodipicolinate. In Lactobacillus acidophilus (strain ATCC 700396 / NCK56 / N2 / NCFM), this protein is 2,3,4,5-tetrahydropyridine-2,6-dicarboxylate N-acetyltransferase.